The sequence spans 1264 residues: MSKTIPLRPANEQFTDSQWQAVFDGDENILVSASAGSGKTTVLVRRVIEKVKSGVDIDRLLIVTYTEAAAREMKERIQVALQKAMNEEQDPERRRHFSRQIALLPTANISTLHAFCLTVIRRFYYLIDIDPVFRMLTDETETLLLKEDVWDALREQFYAENQEAFYQLTANFSNDRSDDGLTNLIFSFYEFAKANPDPEAWINGLTQAYEVGDQLGESKLFQTYLKPLAVETLQRTLQRYEEMVTLTEGEEKLQKIWYLAQNEKEQTKQFLQFLERNDLESAYNLTELLSFDRYPTVRAEELKPTAEQAKQLREQNKKALNDLKKQLFTLSPDAMKQVLKEATPIVQEMAHVGKQFMEAYGAEKRLKNLVDFNDLEHYTLAILAKNQADGWHASEASVYYREKFDEVLVDEYQDINQLQESILYWLRRPLSTEGNLFMVGDVKQSIYSFRLADPTLFIEKYNQYGQGKEGKRIILAENFRSRKDVLDFTNLVFSQLMDERVGQIAYDESAALVHGFDQFSEAADYSTELLIYEKKATESVEFPELQSPELLIEDKTEGELYVTALKIRELIDQNFLIYDKKLKTDRPITYQDIVLLTPTKKNNLTILDVFKSLEIPVQVNDAQNYFQATEIRTMIALLQLIDNPYQDIPLAAVLRSPIVGLKENELVLIRLANKETSYYEAFLTFNQKMEPTMEEAVVQEKTIRFAESLEKWREQARRNQISNLLWTIYRETAYLDYVGGLPVGKQRQANLYALVDRAAAYEKTTFRGLFQFVRFIEKMQEKDKDLAEPVVLSEENAVRVMTIHASKGLEFPVVFVLDMTKEFNVSDLNERYIFEENLGVGIRYLQPEERVMYDTLPFLAIKQVRLRKLLSEEMRKLYVALTRAEQKLFLVGSYKDQAAMWKEWLKVGDVETLVLPAENRLQSKSSLMNWVGMTLVRHQKADEYQQEVVVSNVPQVKKHPANFHIQWFNEEQLRAAIQQLQLPERQAEDLAEKAQLSADKINRGLARLSFNYPFEVATRTTSYQSVSEIKRVFDDPDNKEIGKIEVREDNTIQAQPLIVNRMIEGDLSKPKFLDTVQAPSAAEIGTATHYLLQLIDLSKQPSYEEVRAVQERLVENKLILPAIAEKMNLEQIVAFFDTALGKQLIQHHQTVRREQPFSMLIEAEELIQNYPETTQDDLLIHGIIDGYIELDNQCILYDYKTDHVKGTSPQAISEIVERYRGQMNLYRRALQEATHKEVSHVYLILLNGGVIIDMQTGNVVDFIK.

Residues 12 to 482 (EQFTDSQWQA…IILAENFRSR (471 aa)) form the UvrD-like helicase ATP-binding domain. 33–40 (ASAGSGKT) is a binding site for ATP. In terms of domain architecture, UvrD-like helicase C-terminal spans 520–808 (SEAADYSTEL…RVMTIHASKG (289 aa)).

It belongs to the helicase family. AddA subfamily. In terms of assembly, heterodimer of AddA and AddB/RexB. Mg(2+) is required as a cofactor.

It catalyses the reaction Couples ATP hydrolysis with the unwinding of duplex DNA by translocating in the 3'-5' direction.. It carries out the reaction ATP + H2O = ADP + phosphate + H(+). Functionally, the heterodimer acts as both an ATP-dependent DNA helicase and an ATP-dependent, dual-direction single-stranded exonuclease. Recognizes the chi site generating a DNA molecule suitable for the initiation of homologous recombination. The AddA nuclease domain is required for chi fragment generation; this subunit has the helicase and 3' -&gt; 5' nuclease activities. The sequence is that of ATP-dependent helicase/nuclease subunit A from Enterococcus faecalis (strain ATCC 700802 / V583).